Here is a 463-residue protein sequence, read N- to C-terminus: Glycine--tRNA ligase (463 aa).

Residue R102 coordinates substrate. A disordered region spans residues 113 to 134 (KHGHPPPNGLADIRDPDTGEPG). E165 lines the substrate pocket. Residues 197 to 199 (RNE), 207 to 212 (FRTREF), 284 to 285 (EL), and 328 to 331 (GLTR) contribute to the ATP site. A substrate-binding site is contributed by 212–216 (FEQME). A substrate-binding site is contributed by 324–328 (EPAAG).

This sequence belongs to the class-II aminoacyl-tRNA synthetase family. Homodimer.

Its subcellular location is the cytoplasm. The enzyme catalyses tRNA(Gly) + glycine + ATP = glycyl-tRNA(Gly) + AMP + diphosphate. In terms of biological role, catalyzes the attachment of glycine to tRNA(Gly). The protein is Glycine--tRNA ligase of Mycolicibacterium paratuberculosis (strain ATCC BAA-968 / K-10) (Mycobacterium paratuberculosis).